A 506-amino-acid polypeptide reads, in one-letter code: Chromosomal replication initiator protein DnaA (506 aa).

The interval 1 to 87 (MSVELWQQCV…IGSRRSSAPR (87 aa)) is domain I, interacts with DnaA modulators. The domain II stretch occupies residues 87-169 (RAAPNAPVSA…QVEGALKHTS (83 aa)). A disordered region spans residues 135-154 (DSFDAMAEPAAAPPSGGGRA). Residues 139–148 (AMAEPAAAPP) show a composition bias toward low complexity. Residues 170 to 386 (YLNRTFTFDT…GALKRVIAHS (217 aa)) form a domain III, AAA+ region region. Positions 214, 216, 217, and 218 each coordinate ATP. A domain IV, binds dsDNA region spans residues 387–506 (HFMGRDITIE…YKNLLRTLTT (120 aa)).

It belongs to the DnaA family. As to quaternary structure, oligomerizes as a right-handed, spiral filament on DNA at oriC.

It is found in the cytoplasm. Plays an essential role in the initiation and regulation of chromosomal replication. ATP-DnaA binds to the origin of replication (oriC) to initiate formation of the DNA replication initiation complex once per cell cycle. Binds the DnaA box (a 9 base pair repeat at the origin) and separates the double-stranded (ds)DNA. Forms a right-handed helical filament on oriC DNA; dsDNA binds to the exterior of the filament while single-stranded (ss)DNA is stabiized in the filament's interior. The ATP-DnaA-oriC complex binds and stabilizes one strand of the AT-rich DNA unwinding element (DUE), permitting loading of DNA polymerase. After initiation quickly degrades to an ADP-DnaA complex that is not apt for DNA replication. Binds acidic phospholipids. Functionally, non-cooperatively binds DnaA boxes in the minimal plasmid RK2 replication origin (oriV). In vitro in the presence of plasmid RK2-derived TrfA and E.coli protein HU, forms an open complex at oriV. This complex was not however competent for formation of a pre-priming complex with E.coli DnaB and DnaC. Broad host range plasmid RK2 requires not only DnaA for replication but also TrfA and host factors. This is Chromosomal replication initiator protein DnaA from Pseudomonas putida (strain ATCC 47054 / DSM 6125 / CFBP 8728 / NCIMB 11950 / KT2440).